The primary structure comprises 276 residues: NADPH-dependent 7-cyano-7-deazaguanine reductase (276 aa).

83–85 lines the substrate pocket; that stretch reads IES. Residue 85–86 coordinates NADPH; the sequence is SK. C184 (thioimide intermediate) is an active-site residue. The active-site Proton donor is D191. Substrate is bound at residue 223 to 224; it reads HE. An NADPH-binding site is contributed by 252–253; the sequence is RG.

The protein belongs to the GTP cyclohydrolase I family. QueF type 2 subfamily. In terms of assembly, homodimer.

Its subcellular location is the cytoplasm. It catalyses the reaction 7-aminomethyl-7-carbaguanine + 2 NADP(+) = 7-cyano-7-deazaguanine + 2 NADPH + 3 H(+). Its pathway is tRNA modification; tRNA-queuosine biosynthesis. Functionally, catalyzes the NADPH-dependent reduction of 7-cyano-7-deazaguanine (preQ0) to 7-aminomethyl-7-deazaguanine (preQ1). This chain is NADPH-dependent 7-cyano-7-deazaguanine reductase, found in Desulfotalea psychrophila (strain LSv54 / DSM 12343).